A 473-amino-acid polypeptide reads, in one-letter code: Ribulose bisphosphate carboxylase large chain (473 aa).

The propeptide occupies 1-2; it reads MS. Pro3 bears the N-acetylproline mark. N6,N6,N6-trimethyllysine is present on Lys14. The substrate site is built by Asn123 and Thr173. Catalysis depends on Lys175, which acts as the Proton acceptor. Lys177 contacts substrate. Residues Lys201, Asp203, and Glu204 each contribute to the Mg(2+) site. Position 201 is an N6-carboxylysine (Lys201). His294 acts as the Proton acceptor in catalysis. Substrate is bound by residues Arg295, His327, and Ser379.

It belongs to the RuBisCO large chain family. Type I subfamily. As to quaternary structure, heterohexadecamer of 8 large chains and 8 small chains; disulfide-linked. The disulfide link is formed within the large subunit homodimers. Requires Mg(2+) as cofactor. In terms of processing, the disulfide bond which can form in the large chain dimeric partners within the hexadecamer appears to be associated with oxidative stress and protein turnover.

It is found in the plastid. The protein resides in the chloroplast. It carries out the reaction 2 (2R)-3-phosphoglycerate + 2 H(+) = D-ribulose 1,5-bisphosphate + CO2 + H2O. The enzyme catalyses D-ribulose 1,5-bisphosphate + O2 = 2-phosphoglycolate + (2R)-3-phosphoglycerate + 2 H(+). Functionally, ruBisCO catalyzes two reactions: the carboxylation of D-ribulose 1,5-bisphosphate, the primary event in carbon dioxide fixation, as well as the oxidative fragmentation of the pentose substrate in the photorespiration process. Both reactions occur simultaneously and in competition at the same active site. This chain is Ribulose bisphosphate carboxylase large chain, found in Ajuga chamaepitys (Yellow bugle).